Reading from the N-terminus, the 204-residue chain is Molybdenum cofactor guanylyltransferase (204 aa).

Residues 12 to 14 (LAG), K25, N53, D71, and D101 contribute to the GTP site. Mg(2+) is bound at residue D101.

This sequence belongs to the MobA family. In terms of assembly, monomer. Mg(2+) serves as cofactor.

The protein localises to the cytoplasm. The enzyme catalyses Mo-molybdopterin + GTP + H(+) = Mo-molybdopterin guanine dinucleotide + diphosphate. In terms of biological role, transfers a GMP moiety from GTP to Mo-molybdopterin (Mo-MPT) cofactor (Moco or molybdenum cofactor) to form Mo-molybdopterin guanine dinucleotide (Mo-MGD) cofactor. The protein is Molybdenum cofactor guanylyltransferase of Ralstonia pickettii (strain 12J).